The chain runs to 328 residues: Porphobilinogen deaminase (328 aa).

The residue at position 245 (Cys-245) is an S-(dipyrrolylmethanemethyl)cysteine.

It belongs to the HMBS family. In terms of assembly, monomer. Requires dipyrromethane as cofactor.

It carries out the reaction 4 porphobilinogen + H2O = hydroxymethylbilane + 4 NH4(+). It functions in the pathway porphyrin-containing compound metabolism; protoporphyrin-IX biosynthesis; coproporphyrinogen-III from 5-aminolevulinate: step 2/4. It participates in porphyrin-containing compound metabolism; chlorophyll biosynthesis. Functionally, tetrapolymerization of the monopyrrole PBG into the hydroxymethylbilane pre-uroporphyrinogen in several discrete steps. This chain is Porphobilinogen deaminase, found in Gloeobacter violaceus (strain ATCC 29082 / PCC 7421).